Consider the following 454-residue polypeptide: NADP-specific glutamate dehydrogenase 1 (454 aa).

Lys110 is an active-site residue. 174–203 is a binding site for NAD(+); sequence GVLTGKGLNWGGSLIRPEATGYGLVYYTQA.

This sequence belongs to the Glu/Leu/Phe/Val dehydrogenases family. As to quaternary structure, homohexamer.

It catalyses the reaction L-glutamate + NADP(+) + H2O = 2-oxoglutarate + NH4(+) + NADPH + H(+). The protein is NADP-specific glutamate dehydrogenase 1 (GDH1) of Saccharomyces uvarum (strain ATCC 76518 / CBS 7001 / CLIB 283 / NBRC 10550 / MCYC 623 / NCYC 2669 / NRRL Y-11845) (Yeast).